The sequence spans 103 residues: Transcription factor S (103 aa).

Residues C4, C7, C20, C23, C64, C67, C92, and C95 each contribute to the Zn(2+) site. A C4-type zinc finger spans residues C4–C23. A TFIIS-type zinc finger spans residues T60–R100.

Belongs to the archaeal RpoM/eukaryotic RPA12/RPB9/RPC11 RNA polymerase family.

Functionally, induces RNA cleavage activity in the RNA polymerase. In its presence, the cleavage activity of the RNA polymerase truncates the RNA back to position +15 in a stepwise manner by releasing mainly dinucleotides from the 3'-end of the nascent RNA. The truncated RNAs are able to continue elongation. Involved in transcriptional proofreading and fidelity. Misincorporation of nucleotides during elongation of transcription leads to arrested elongation complexes which are rescued by TFS-promoted removal of a dinucleotide from the 3'-end. TFS is able to induce a cleavage resynthesis cycle in stalled elongation complexes (resulting from the next missing nucleotide or a reduced incorporation rate of a wrong nucleotide) preventing misincorporation and enabling proofreading in a post-incorporation manner. Pausing of elongation complexes is the main determinant of TFS-induced RNA cleavage. In Archaeoglobus fulgidus (strain ATCC 49558 / DSM 4304 / JCM 9628 / NBRC 100126 / VC-16), this protein is Transcription factor S.